We begin with the raw amino-acid sequence, 135 residues long: Interleukin-4 (135 aa).

The first 24 residues, 1–24 (MGLTSQLIPVLVCLLACTSHFVHG), serve as a signal peptide directing secretion. 3 disulfides stabilise this stretch: Cys-27-Cys-135, Cys-48-Cys-85, and Cys-70-Cys-105. Residues Asn-62 and Asn-96 are each glycosylated (N-linked (GlcNAc...) asparagine).

It belongs to the IL-4/IL-13 family.

Its subcellular location is the secreted. Participates in at least several B-cell activation processes as well as of other cell types. It is a costimulator of DNA-synthesis. It induces the expression of class II MHC molecules on resting B-cells. It enhances both secretion and cell surface expression of IgE and IgG1. It also regulates the expression of the low affinity Fc receptor for IgE (CD23) on both lymphocytes and monocytes. Positively regulates IL31RA expression in macrophages. Stimulates autophagy in dendritic cells by interfering with mTORC1 signaling and through the induction of RUFY4. The chain is Interleukin-4 (IL4) from Cervus elaphus (Red deer).